Here is a 534-residue protein sequence, read N- to C-terminus: Glucose-6-phosphate isomerase (534 aa).

Glutamate 356 functions as the Proton donor in the catalytic mechanism. Catalysis depends on residues histidine 387 and lysine 502.

It belongs to the GPI family.

The protein localises to the cytoplasm. It catalyses the reaction alpha-D-glucose 6-phosphate = beta-D-fructose 6-phosphate. It participates in carbohydrate biosynthesis; gluconeogenesis. It functions in the pathway carbohydrate degradation; glycolysis; D-glyceraldehyde 3-phosphate and glycerone phosphate from D-glucose: step 2/4. Its function is as follows. Catalyzes the reversible isomerization of glucose-6-phosphate to fructose-6-phosphate. The polypeptide is Glucose-6-phosphate isomerase (Desulfotalea psychrophila (strain LSv54 / DSM 12343)).